Consider the following 145-residue polypeptide: MYQFLIIVILAAFVNGAQEKTECQQHRERETRSRAPLPLRLIPECDENGEYKPLQCFKDSKFCACWDKTGQPMTEPKQGIKACECIVQRETVQKIRGLIGAFTPQCEEDGKYSKMQCHGSTGHCWCVEQVSGRNVTAPVRGRLEC.

The N-terminal stretch at Met-1–Gly-16 is a signal peptide. Thyroglobulin type-1 domains follow at residues Lys-20 to Met-73 and Ala-82 to Cys-145. Disulfide bonds link Cys-23–Cys-45, Cys-56–Cys-63, Cys-85–Cys-106, Cys-117–Cys-124, and Cys-126–Cys-145.

As to expression, expressed by the venom gland.

The protein resides in the secreted. Its function is as follows. Cysteine proteinase inhibitor. This chain is U20-hexatoxin-Hi1a, found in Hadronyche infensa (Fraser island funnel-web spider).